A 109-amino-acid chain; its full sequence is Nucleoid-associated protein Plut_1285 (109 aa).

This sequence belongs to the YbaB/EbfC family. Homodimer.

The protein resides in the cytoplasm. The protein localises to the nucleoid. In terms of biological role, binds to DNA and alters its conformation. May be involved in regulation of gene expression, nucleoid organization and DNA protection. The polypeptide is Nucleoid-associated protein Plut_1285 (Chlorobium luteolum (strain DSM 273 / BCRC 81028 / 2530) (Pelodictyon luteolum)).